Here is a 782-residue protein sequence, read N- to C-terminus: Formin-like protein 9 (782 aa).

The signal sequence occupies residues 1-24; the sequence is MQNFWFAIFFFLLTCAPPSPLSYA. Residues 102-122 form a helical membrane-spanning segment; the sequence is LLLPALSAVLVIATVIGLALF. 3 disordered regions span residues 191–223, 264–287, and 387–407; these read DSPE…EEEE, MSPP…RLRV, and SSSQ…PPLV. The segment covering 214-223 has biased composition (acidic residues); that stretch reads EVNEEDEEEE. Over residues 396–407 the composition is skewed to pro residues; that stretch reads ALPPPTRPPPLV. The region spanning 406–782 is the FH2 domain; the sequence is LVPPSQPFVV…LDQVCKEMGD (377 aa).

Belongs to the formin-like family. Class-I subfamily.

It is found in the membrane. In terms of biological role, might be involved in the organization and polarity of the actin cytoskeleton. In Arabidopsis thaliana (Mouse-ear cress), this protein is Formin-like protein 9 (FH9).